Reading from the N-terminus, the 809-residue chain is Sucrose synthase 2 (809 aa).

Positions 278–756 are GT-B glycosyltransferase; sequence MVFNVVILSP…GLQRIYERYT (479 aa).

Belongs to the glycosyltransferase 1 family. Plant sucrose synthase subfamily.

The enzyme catalyses an NDP-alpha-D-glucose + D-fructose = a ribonucleoside 5'-diphosphate + sucrose + H(+). In terms of biological role, sucrose-cleaving enzyme that provides UDP-glucose and fructose for various metabolic pathways. The protein is Sucrose synthase 2 (SUS2) of Pisum sativum (Garden pea).